We begin with the raw amino-acid sequence, 121 residues long: Small ribosomal subunit protein uS13 (121 aa).

Residues Arg-92–Lys-121 are disordered.

This sequence belongs to the universal ribosomal protein uS13 family. Part of the 30S ribosomal subunit. Forms a loose heterodimer with protein S19. Forms two bridges to the 50S subunit in the 70S ribosome.

Located at the top of the head of the 30S subunit, it contacts several helices of the 16S rRNA. In the 70S ribosome it contacts the 23S rRNA (bridge B1a) and protein L5 of the 50S subunit (bridge B1b), connecting the 2 subunits; these bridges are implicated in subunit movement. Contacts the tRNAs in the A and P-sites. This is Small ribosomal subunit protein uS13 from Burkholderia thailandensis (strain ATCC 700388 / DSM 13276 / CCUG 48851 / CIP 106301 / E264).